Consider the following 346-residue polypeptide: Pheromone receptor 2 (346 aa).

A run of 7 helical transmembrane segments spans residues 8-28 (VSFG…CLIH), 34-54 (IGVL…GINA), 71-94 (LSAI…LQRL), 115-135 (LIDF…FFIV), 160-180 (FIYH…AVLV), 219-239 (VLVS…GGLL), and 270-290 (LSIL…FFGL).

It belongs to the G-protein coupled receptor 4 family.

The protein localises to the membrane. Receptor for the A1 pheromone, a prenylated mating factor. This Mycosarcoma maydis (Corn smut fungus) protein is Pheromone receptor 2 (PRA2).